The primary structure comprises 122 residues: Large ribosomal subunit protein bL12 (122 aa).

Belongs to the bacterial ribosomal protein bL12 family. In terms of assembly, homodimer. Part of the ribosomal stalk of the 50S ribosomal subunit. Forms a multimeric L10(L12)X complex, where L10 forms an elongated spine to which 2 to 4 L12 dimers bind in a sequential fashion. Binds GTP-bound translation factors.

Forms part of the ribosomal stalk which helps the ribosome interact with GTP-bound translation factors. Is thus essential for accurate translation. In Shewanella denitrificans (strain OS217 / ATCC BAA-1090 / DSM 15013), this protein is Large ribosomal subunit protein bL12.